A 236-amino-acid chain; its full sequence is Small ribosomal subunit protein eS6 (236 aa).

2 positions are modified to phosphoserine: Ser-232 and Ser-233.

It belongs to the eukaryotic ribosomal protein eS6 family. Post-translationally, phosphorylated.

This is Small ribosomal subunit protein eS6 (RPS6) from Debaryomyces hansenii (strain ATCC 36239 / CBS 767 / BCRC 21394 / JCM 1990 / NBRC 0083 / IGC 2968) (Yeast).